We begin with the raw amino-acid sequence, 834 residues long: MKLFQKIFGSYSQREVKRIMPIVDKIDALDSKVQALSNEQLRNKTDEFKERLDKGESLDSILPEAFAVVREVGFRTVGLKQYREQLIGGIVIHQGRIAEMKTGEGKTLVATAPAYLNALTGKGVHIVTVNDYLAKRDRDTMAPIYEALGLKVGVILHDMSQSQRQEAYNCDITYGTNSEFGFDYLRDNMVIYKEERVQRKLNFAIVDEVDSILIDEARTPLIISGEGEKSTEFYNIANGFAKSLEKEDYKVDEKANAVMLNDTGIKKAETFFSLENYADPENMEIQHYVVQALKANYIMKRDKDYMVKNGEVLIVDEFTGRMMEGRRYSDGLHQAIEAKEGVKVERESKTLATITYQNYFRIFNKLSGMTGTAQTEENEFRHIYGLDVIVVPTHKPIAREDFPDVVYKSAKGKFKAIADEIYETYKKGQPALVGTVSIEKSELLSDMLKRKGVPHQVLNAKFHEKEADIISYAGQKGTVTIATNMAGRGTDIKLGKGVVALGGLKIIGTERHESRRIDNQLRGRSGRQGDPGMSRFYVSLEDDLMRIFGSDRLQGIVEKLGLKDDEAIESKMVSNAIENAQKKVEGNNFDIRKTLLQYDDVINKQREIIYKQRSQVLEGEDLKNDVQDMIKSLINSIVDSHISGIEEEFEDEIVKLIEYMEDVYVPKDSVKKEDIINLSNEAIKDKFIDIAQKIYEQKEIEFTSEQMREIERVILLRVVDTRWMDHIDDMEHLKRAIGLRAYRQQEPAQAYQFEGSEMFEEMIYNIKLDTVKYLMHVQIERAPERERVVKNVITNQESDSIKKTPVKREKTVGRNDLCPCGSGKKYKNCCGRTV.

ATP contacts are provided by residues Gln-85, 103–107, and Asp-491; that span reads GEGKT. Residues Cys-818, Cys-820, Cys-829, and Cys-830 each contribute to the Zn(2+) site.

This sequence belongs to the SecA family. Monomer and homodimer. Part of the essential Sec protein translocation apparatus which comprises SecA, SecYEG and auxiliary proteins SecDF. Other proteins may also be involved. Zn(2+) is required as a cofactor.

It is found in the cell membrane. The protein localises to the cytoplasm. It carries out the reaction ATP + H2O + cellular proteinSide 1 = ADP + phosphate + cellular proteinSide 2.. In terms of biological role, part of the Sec protein translocase complex. Interacts with the SecYEG preprotein conducting channel. Has a central role in coupling the hydrolysis of ATP to the transfer of proteins into and across the cell membrane, serving as an ATP-driven molecular motor driving the stepwise translocation of polypeptide chains across the membrane. The sequence is that of Protein translocase subunit SecA from Clostridium kluyveri (strain ATCC 8527 / DSM 555 / NBRC 12016 / NCIMB 10680 / K1).